Reading from the N-terminus, the 99-residue chain is Aspartyl/glutamyl-tRNA(Asn/Gln) amidotransferase subunit C (99 aa).

Belongs to the GatC family. Heterotrimer of A, B and C subunits.

It catalyses the reaction L-glutamyl-tRNA(Gln) + L-glutamine + ATP + H2O = L-glutaminyl-tRNA(Gln) + L-glutamate + ADP + phosphate + H(+). The enzyme catalyses L-aspartyl-tRNA(Asn) + L-glutamine + ATP + H2O = L-asparaginyl-tRNA(Asn) + L-glutamate + ADP + phosphate + 2 H(+). Its function is as follows. Allows the formation of correctly charged Asn-tRNA(Asn) or Gln-tRNA(Gln) through the transamidation of misacylated Asp-tRNA(Asn) or Glu-tRNA(Gln) in organisms which lack either or both of asparaginyl-tRNA or glutaminyl-tRNA synthetases. The reaction takes place in the presence of glutamine and ATP through an activated phospho-Asp-tRNA(Asn) or phospho-Glu-tRNA(Gln). In Polaromonas sp. (strain JS666 / ATCC BAA-500), this protein is Aspartyl/glutamyl-tRNA(Asn/Gln) amidotransferase subunit C.